The sequence spans 341 residues: tRNA N6-adenosine threonylcarbamoyltransferase (341 aa).

Residues H115 and H119 each coordinate Fe cation. Residues 137-141, D170, G183, D187, and N276 each bind substrate; that span reads IVSGG. D304 is a binding site for Fe cation.

The protein belongs to the KAE1 / TsaD family. Fe(2+) is required as a cofactor.

Its subcellular location is the cytoplasm. The enzyme catalyses L-threonylcarbamoyladenylate + adenosine(37) in tRNA = N(6)-L-threonylcarbamoyladenosine(37) in tRNA + AMP + H(+). Its function is as follows. Required for the formation of a threonylcarbamoyl group on adenosine at position 37 (t(6)A37) in tRNAs that read codons beginning with adenine. Is involved in the transfer of the threonylcarbamoyl moiety of threonylcarbamoyl-AMP (TC-AMP) to the N6 group of A37, together with TsaE and TsaB. TsaD likely plays a direct catalytic role in this reaction. This Staphylococcus aureus (strain Mu3 / ATCC 700698) protein is tRNA N6-adenosine threonylcarbamoyltransferase.